A 93-amino-acid chain; its full sequence is uncharacterized protein (93 aa).

To M.tuberculosis Rv1738.

This is an uncharacterized protein from Mycobacterium tuberculosis (strain CDC 1551 / Oshkosh).